A 198-amino-acid polypeptide reads, in one-letter code: MTVLTIYREDLPEQPLTQTTDAAEIAALLAQQGLRFERWPAQVELADDATPEQILAAYATEVDRVKTEGGYITVDAVSLRPDHPDRAALRQKFLAEHIHSEDEVRFFVAGQGLFSLHLGDHVYALLCTQNDWISVPAGTRHWFDMGSQPYFTALRFFNNPRRLGRSVYRQRHRQSVPAPALNSGSERDNFILSLALAC.

Histidine 97, histidine 99, glutamate 103, and histidine 141 together coordinate Fe(2+). Positions 97, 99, 103, and 141 each coordinate Ni(2+).

This sequence belongs to the acireductone dioxygenase (ARD) family. As to quaternary structure, monomer. The cofactor is Fe(2+). Requires Ni(2+) as cofactor.

It carries out the reaction 1,2-dihydroxy-5-(methylsulfanyl)pent-1-en-3-one + O2 = 3-(methylsulfanyl)propanoate + CO + formate + 2 H(+). The catalysed reaction is 1,2-dihydroxy-5-(methylsulfanyl)pent-1-en-3-one + O2 = 4-methylsulfanyl-2-oxobutanoate + formate + 2 H(+). It functions in the pathway amino-acid biosynthesis; L-methionine biosynthesis via salvage pathway; L-methionine from S-methyl-5-thio-alpha-D-ribose 1-phosphate: step 5/6. Catalyzes 2 different reactions between oxygen and the acireductone 1,2-dihydroxy-3-keto-5-methylthiopentene (DHK-MTPene) depending upon the metal bound in the active site. Fe-containing acireductone dioxygenase (Fe-ARD) produces formate and 2-keto-4-methylthiobutyrate (KMTB), the alpha-ketoacid precursor of methionine in the methionine recycle pathway. Ni-containing acireductone dioxygenase (Ni-ARD) produces methylthiopropionate, carbon monoxide and formate, and does not lie on the methionine recycle pathway. This chain is Acireductone dioxygenase, found in Synechococcus elongatus (strain ATCC 33912 / PCC 7942 / FACHB-805) (Anacystis nidulans R2).